Here is a 335-residue protein sequence, read N- to C-terminus: Pyridoxal 5'-phosphate synthase subunit PdxS (335 aa).

Residue Asp59 coordinates D-ribose 5-phosphate. The Schiff-base intermediate with D-ribose 5-phosphate role is filled by Lys116. Residue Gly188 coordinates D-ribose 5-phosphate. Position 200 (Lys200) interacts with D-glyceraldehyde 3-phosphate. D-ribose 5-phosphate is bound by residues Gly253 and 274–275 (GS).

This sequence belongs to the PdxS/SNZ family. As to quaternary structure, in the presence of PdxT, forms a dodecamer of heterodimers.

It catalyses the reaction aldehydo-D-ribose 5-phosphate + D-glyceraldehyde 3-phosphate + L-glutamine = pyridoxal 5'-phosphate + L-glutamate + phosphate + 3 H2O + H(+). It participates in cofactor biosynthesis; pyridoxal 5'-phosphate biosynthesis. In terms of biological role, catalyzes the formation of pyridoxal 5'-phosphate from ribose 5-phosphate (RBP), glyceraldehyde 3-phosphate (G3P) and ammonia. The ammonia is provided by the PdxT subunit. Can also use ribulose 5-phosphate and dihydroxyacetone phosphate as substrates, resulting from enzyme-catalyzed isomerization of RBP and G3P, respectively. This chain is Pyridoxal 5'-phosphate synthase subunit PdxS, found in Desulfurococcus amylolyticus (strain DSM 18924 / JCM 16383 / VKM B-2413 / 1221n) (Desulfurococcus kamchatkensis).